Consider the following 337-residue polypeptide: Inositol 2-dehydrogenase (337 aa).

It belongs to the Gfo/Idh/MocA family. In terms of assembly, homotetramer.

The catalysed reaction is myo-inositol + NAD(+) = scyllo-inosose + NADH + H(+). Its function is as follows. Involved in the oxidation of myo-inositol (MI) to 2-keto-myo-inositol (2KMI or 2-inosose). The sequence is that of Inositol 2-dehydrogenase from Burkholderia multivorans (strain ATCC 17616 / 249).